The chain runs to 127 residues: UPF0166 protein PYRAB06660 (127 aa).

It belongs to the UPF0166 family.

The chain is UPF0166 protein PYRAB06660 from Pyrococcus abyssi (strain GE5 / Orsay).